Here is a 177-residue protein sequence, read N- to C-terminus: Embryogenesis-like protein (177 aa).

Residues 98–118 (VDEINLKFAEAREEIEMAMDA) adopt a coiled-coil conformation.

As to quaternary structure, interacts with HAG1/GCN5. In terms of tissue distribution, expressed in flowers, leaves, stems and siliques.

It is found in the nucleus. Its function is as follows. Activates gene expression by recruiting HAG1/GCN5 and triggering subsequent histone H3 acetylation of target genes promoters. In Arabidopsis thaliana (Mouse-ear cress), this protein is Embryogenesis-like protein.